A 329-amino-acid polypeptide reads, in one-letter code: Ankyrin repeat and SOCS box protein 5 (329 aa).

6 ANK repeats span residues 69–98, 102–131, 135–164, 167–196, 200–229, and 232–261; these read ADRSPLHEAASQGRLLALRTLLSQGYNVNA, DHVTPLHEACLGDHVACARTLLQAGANVNA, DGVTPLFNACSQGSTSCTELLLEYGAKPQL, CLPSPTHEAASKGHHECLEILISWGVDVDQ, HLGTPLYVACMSQQFHCVRKLLYAGADVQK, and YWDTPLHAAAQQSCTEIVNLLLEFGADINA. The 52-residue stretch at 278–329 folds into the SOCS box domain; it reads LVERLLLQHEATPSSLCQLCRLCIRNYIGRPRLHLIPQLQLPTLLQNFLQYR.

Belongs to the ankyrin SOCS box (ASB) family.

It functions in the pathway protein modification; protein ubiquitination. May be a substrate-recognition component of a SCF-like ECS (Elongin-Cullin-SOCS-box protein) E3 ubiquitin-protein ligase complex which mediates the ubiquitination and subsequent proteasomal degradation of target proteins. May play a role in the initiation of arteriogenesis. This Bos taurus (Bovine) protein is Ankyrin repeat and SOCS box protein 5 (ASB5).